We begin with the raw amino-acid sequence, 468 residues long: Mannan endo-1,4-beta-mannosidase 3 (468 aa).

The signal sequence occupies residues 1–23 (MTVRPRPAAAAIIIAAVFGAAAA). W86 lines the substrate pocket. N152 carries an N-linked (GlcNAc...) asparagine glycan. N201 contacts substrate. Catalysis depends on E202, which acts as the Proton donor. Residue Y281 participates in substrate binding. An N-linked (GlcNAc...) asparagine glycan is attached at N300. E321 acts as the Nucleophile in catalysis. N333 carries N-linked (GlcNAc...) asparagine glycosylation. Substrate contacts are provided by W364 and D371. Residues 415–436 (LRRRRRRPASSHRKTRLGSGGD) are disordered. Positions 416 to 430 (RRRRRRPASSHRKTR) are enriched in basic residues.

This sequence belongs to the glycosyl hydrolase 5 (cellulase A) family. Expressed in seeds.

It localises to the secreted. It carries out the reaction Random hydrolysis of (1-&gt;4)-beta-D-mannosidic linkages in mannans, galactomannans and glucomannans.. The sequence is that of Mannan endo-1,4-beta-mannosidase 3 (MAN3) from Oryza sativa subsp. japonica (Rice).